The primary structure comprises 148 residues: uncharacterized protein (148 aa).

The protein belongs to the IIV-6 395R family.

This is an uncharacterized protein from Aedes vexans (Inland floodwater mosquito).